A 253-amino-acid chain; its full sequence is 5-oxoprolinase subunit A (253 aa).

This sequence belongs to the LamB/PxpA family. In terms of assembly, forms a complex composed of PxpA, PxpB and PxpC.

The catalysed reaction is 5-oxo-L-proline + ATP + 2 H2O = L-glutamate + ADP + phosphate + H(+). Functionally, catalyzes the cleavage of 5-oxoproline to form L-glutamate coupled to the hydrolysis of ATP to ADP and inorganic phosphate. This is 5-oxoprolinase subunit A from Ruegeria pomeroyi (strain ATCC 700808 / DSM 15171 / DSS-3) (Silicibacter pomeroyi).